A 248-amino-acid polypeptide reads, in one-letter code: MKFTLTGSGRMGQQVADVINRSGIHEIASILDDRSVVTAESFLGSDAIIDFTVRDAFLQNLPAMLQSGVPVVVGTTGWDDQIESVKRRVIESGSSLLYSANFSLGVNIFLRTVREAARLIAPFDQFDIAFTEHHHTGKADFPSGTALRAAEMILSVNPRKRTIVRELFDDRKITADELQVGALRLGSVFGKHTAYIDSEMDEIVISHNAKNREGFASGAVQTAKWLAARHTASPGFYTMDDFLNEMLA.

NAD(+)-binding positions include Asp-32, 74–76 (GTT), and 99–102 (SANF). The active-site Proton donor/acceptor is the His-134. His-135 contributes to the (S)-2,3,4,5-tetrahydrodipicolinate binding site. The active-site Proton donor is Lys-138. Position 144-145 (144-145 (GT)) interacts with (S)-2,3,4,5-tetrahydrodipicolinate.

It belongs to the DapB family.

It is found in the cytoplasm. The catalysed reaction is (S)-2,3,4,5-tetrahydrodipicolinate + NAD(+) + H2O = (2S,4S)-4-hydroxy-2,3,4,5-tetrahydrodipicolinate + NADH + H(+). It catalyses the reaction (S)-2,3,4,5-tetrahydrodipicolinate + NADP(+) + H2O = (2S,4S)-4-hydroxy-2,3,4,5-tetrahydrodipicolinate + NADPH + H(+). The protein operates within amino-acid biosynthesis; L-lysine biosynthesis via DAP pathway; (S)-tetrahydrodipicolinate from L-aspartate: step 4/4. Its function is as follows. Catalyzes the conversion of 4-hydroxy-tetrahydrodipicolinate (HTPA) to tetrahydrodipicolinate. The sequence is that of 4-hydroxy-tetrahydrodipicolinate reductase from Chlorobium limicola (strain DSM 245 / NBRC 103803 / 6330).